We begin with the raw amino-acid sequence, 875 residues long: Alanine--tRNA ligase (875 aa).

4 residues coordinate Zn(2+): histidine 563, histidine 567, cysteine 665, and histidine 669.

It belongs to the class-II aminoacyl-tRNA synthetase family. It depends on Zn(2+) as a cofactor.

The protein resides in the cytoplasm. The catalysed reaction is tRNA(Ala) + L-alanine + ATP = L-alanyl-tRNA(Ala) + AMP + diphosphate. Catalyzes the attachment of alanine to tRNA(Ala) in a two-step reaction: alanine is first activated by ATP to form Ala-AMP and then transferred to the acceptor end of tRNA(Ala). Also edits incorrectly charged Ser-tRNA(Ala) and Gly-tRNA(Ala) via its editing domain. This is Alanine--tRNA ligase from Desulfitobacterium hafniense (strain Y51).